Here is a 128-residue protein sequence, read N- to C-terminus: Large ribosomal subunit protein bL17 (128 aa).

The protein belongs to the bacterial ribosomal protein bL17 family. As to quaternary structure, part of the 50S ribosomal subunit. Contacts protein L32.

This chain is Large ribosomal subunit protein bL17, found in Streptococcus sanguinis (strain SK36).